Consider the following 234-residue polypeptide: MFLNNLPALTLGTAIPWDLVQQSFWPILSGGIYYTIPLTILSFIFGMILALITALARMSKVRPLRWVFSVYVSAIRGTPLLVQLFIIFYLFPAFNVTLDPFPSAVIAFSLNVGAYASEIIRASILSVPKGQWEAGYTIGMTHQKTLFRVILPQAFRVSIPPLSNTFISLIKDTSLASQILVAELFRKAQEIGARNLDQILVIYIEAAFIYWIICFLLSLVQHVIERRLDRYVAK.

The next 5 membrane-spanning stretches (helical) occupy residues 8-28 (ALTL…WPIL), 36-56 (IPLT…TALA), 78-98 (TPLL…NVTL), 100-120 (PFPS…SEII), and 199-219 (ILVI…LLSL). An ABC transmembrane type-1 domain is found at 32–221 (IYYTIPLTIL…IICFLLSLVQ (190 aa)).

The protein belongs to the binding-protein-dependent transport system permease family. As to quaternary structure, the complex is composed of two ATP-binding proteins (TcyC), two transmembrane proteins (TcyB) and a solute-binding protein (TcyA).

Its subcellular location is the cell membrane. Its function is as follows. Part of the ABC transporter complex TcyABC involved in L-cystine import. Probably responsible for the translocation of the substrate across the membrane. This is L-cystine transport system permease protein TcyB (tcyB) from Bacillus subtilis (strain 168).